A 304-amino-acid chain; its full sequence is HPr kinase/phosphorylase (304 aa).

Active-site residues include His-136 and Lys-157. ATP is bound at residue 151-158 (GESGIGKS). Residue Ser-158 participates in Mg(2+) binding. The active-site Proton acceptor; for phosphorylation activity. Proton donor; for dephosphorylation activity is the Asp-175. An important for the catalytic mechanism of both phosphorylation and dephosphorylation region spans residues 198–207 (LEVRGIGIID). A Mg(2+)-binding site is contributed by Glu-199. Residue Arg-240 is part of the active site. The important for the catalytic mechanism of dephosphorylation stretch occupies residues 261–266 (PVRPGR).

This sequence belongs to the HPrK/P family. Homohexamer. The cofactor is Mg(2+).

The enzyme catalyses [HPr protein]-L-serine + ATP = [HPr protein]-O-phospho-L-serine + ADP + H(+). It catalyses the reaction [HPr protein]-O-phospho-L-serine + phosphate + H(+) = [HPr protein]-L-serine + diphosphate. Its function is as follows. Catalyzes the ATP- as well as the pyrophosphate-dependent phosphorylation of a specific serine residue in HPr, a phosphocarrier protein of the phosphoenolpyruvate-dependent sugar phosphotransferase system (PTS). HprK/P also catalyzes the pyrophosphate-producing, inorganic phosphate-dependent dephosphorylation (phosphorolysis) of seryl-phosphorylated HPr (P-Ser-HPr). The two antagonistic activities of HprK/P are regulated by several intracellular metabolites, which change their concentration in response to the absence or presence of rapidly metabolisable carbon sources (glucose, fructose, etc.) in the growth medium. Therefore, by controlling the phosphorylation state of HPr, HPrK/P is a sensor enzyme that plays a major role in the regulation of carbon metabolism and sugar transport: it mediates carbon catabolite repression (CCR), and regulates PTS-catalyzed carbohydrate uptake and inducer exclusion. The protein is HPr kinase/phosphorylase of Clostridium botulinum (strain Eklund 17B / Type B).